Here is a 126-residue protein sequence, read N- to C-terminus: Small ribosomal subunit protein uS12 (126 aa).

A disordered region spans residues 1–28 (MPTINQLVRKGRQSETTKSKSPALQDCP). Position 89 is a 3-methylthioaspartic acid (Asp-89). The disordered stretch occupies residues 103–126 (DTQGVKDRKQARSKYGAKRAKAAK). Residues 113–126 (ARSKYGAKRAKAAK) show a composition bias toward basic residues.

Belongs to the universal ribosomal protein uS12 family. As to quaternary structure, part of the 30S ribosomal subunit. Contacts proteins S8 and S17. May interact with IF1 in the 30S initiation complex.

With S4 and S5 plays an important role in translational accuracy. Functionally, interacts with and stabilizes bases of the 16S rRNA that are involved in tRNA selection in the A site and with the mRNA backbone. Located at the interface of the 30S and 50S subunits, it traverses the body of the 30S subunit contacting proteins on the other side and probably holding the rRNA structure together. The combined cluster of proteins S8, S12 and S17 appears to hold together the shoulder and platform of the 30S subunit. The sequence is that of Small ribosomal subunit protein uS12 from Burkholderia orbicola (strain MC0-3).